Consider the following 180-residue polypeptide: MSRIGKSPVTIPEGVTVDHKDGVVTVKGKLGELKQEIRDIDVKIEDNVITFERSSEKSDQKAKHGLYRALVNNMIEGVTNGYTKSLELVGVGYRATNQGNKLDLAVGYSHNIVLDLAPEVKVETISEKGKNPIVKVTSHDKQLVGQVAAKIRSFRAPEPYKGKGIKFVGEQLRRKAGKSA.

Belongs to the universal ribosomal protein uL6 family. As to quaternary structure, part of the 50S ribosomal subunit.

Its function is as follows. This protein binds to the 23S rRNA, and is important in its secondary structure. It is located near the subunit interface in the base of the L7/L12 stalk, and near the tRNA binding site of the peptidyltransferase center. In Christiangramia forsetii (strain DSM 17595 / CGMCC 1.15422 / KT0803) (Gramella forsetii), this protein is Large ribosomal subunit protein uL6.